Reading from the N-terminus, the 121-residue chain is Structural protein p14.5 (121 aa).

Disordered regions lie at residues 1–24 (MADF…IGSL) and 84–121 (TSLV…HKSK). An N-acetylalanine; by host modification is found at A2. The span at 104-121 (KPKKKKHLFPKLSSHKSK) shows a compositional bias: basic residues.

Belongs to the asfivirus structural protein p14.5 family. Interacts with the major capsid protein. Interacts with host IRF3; this interaction interferes with the recruitment of IRF3 to TBK1. Post-translationally, acetylated.

Its subcellular location is the virion. Structural protein required for transport of intracellular particles from the assembly sites to the plasma membrane. Binds to both ssDNA and dsDNA. Suppressed the activation of the cGAS/STING pathway by interfering with the recruitment of IRF3 to TBK1, which in turn suppresses IRF3 phosphorylation, decreasing interferon production. In Ornithodoros (relapsing fever ticks), this protein is Structural protein p14.5.